A 325-amino-acid chain; its full sequence is Aminotransferase tasG (325 aa).

Glycine 35 provides a ligand contact to substrate. Pyridoxal 5'-phosphate-binding positions include 89-90 (TW), asparagine 143, tyrosine 174, and 203-205 (SFA). Substrate is bound at residue asparagine 143. The residue at position 206 (lysine 206) is an N6-(pyridoxal phosphate)lysine. Arginine 214 is a binding site for pyridoxal 5'-phosphate.

The protein belongs to the class-I pyridoxal-phosphate-dependent aminotransferase family. Homodimer. Pyridoxal 5'-phosphate is required as a cofactor.

It participates in secondary metabolite biosynthesis. Its function is as follows. Aminotransferase; part of the gene cluster that mediates the biosynthesis of the tetramic acids Sch210971 and Sch210972, potential anti-HIV fungal natural product that contain a decalin core. The PKS module of tasS together with the enoylreductase tasC catalyze the formation of the polyketide unit which is then conjugated to 4-hydroxyl-4-methyl glutamate (HMG) by the condensation domain of the tasS NRPS module. One unique structural feature of Sch210971 and Sch210972 is the tetramic acid motif proposed to be derived from the non-proteinogenic amino acid HMG, by a Dieckmann-type condensation catalyzed by the reductase domain of tasS. The aldolase tasA catalyzes the aldol condensation of 2 molecules of pyruvic acid to yield the intermediate 4-hydroxyl-4-methyl-2-oxoglutarate (HMOG), which can then be stereoselectively transaminated, may be by tasG, to form HMG. The Diels-Alderase tas3 then uses the Dieckmann product of tasS as substrate and catalyzes the Diels-Alder cycloaddition to form the decalin ring of Sch210971 and Sch210972. In Hapsidospora irregularis, this protein is Aminotransferase tasG.